The primary structure comprises 705 residues: Polyribonucleotide nucleotidyltransferase (705 aa).

The Mg(2+) site is built by Asp487 and Asp493. A KH domain is found at 554–613 (PKILTMSINPDKIRDVIGPSGKQINKIIEDTGVKIDIEQDGTIFISSTDESMNQKAKKII). The S1 motif domain maps to 623–691 (GQLYLGKVKR…KQGRVNLSRK (69 aa)).

This sequence belongs to the polyribonucleotide nucleotidyltransferase family. Mg(2+) serves as cofactor.

The protein localises to the cytoplasm. The catalysed reaction is RNA(n+1) + phosphate = RNA(n) + a ribonucleoside 5'-diphosphate. Its function is as follows. Involved in mRNA degradation. Catalyzes the phosphorolysis of single-stranded polyribonucleotides processively in the 3'- to 5'-direction. The polypeptide is Polyribonucleotide nucleotidyltransferase (Bacillus licheniformis (strain ATCC 14580 / DSM 13 / JCM 2505 / CCUG 7422 / NBRC 12200 / NCIMB 9375 / NCTC 10341 / NRRL NRS-1264 / Gibson 46)).